The sequence spans 116 residues: Iron-sulfur cluster insertion protein ErpA (116 aa).

Iron-sulfur cluster is bound by residues cysteine 44, cysteine 108, and cysteine 110.

It belongs to the HesB/IscA family. Homodimer. Iron-sulfur cluster is required as a cofactor.

Required for insertion of 4Fe-4S clusters for at least IspG. In Pseudomonas syringae pv. syringae (strain B728a), this protein is Iron-sulfur cluster insertion protein ErpA.